The following is a 341-amino-acid chain: Large ribosomal subunit protein uL3 (341 aa).

Disordered stretches follow at residues 1-31 (MGHRKLSSPRRGSAGLRPRKRSEELLPSPRS) and 234-261 (HRKGSRKVGTKGPSLGTPSYVPQPGQMG).

The protein belongs to the universal ribosomal protein uL3 family. In terms of assembly, part of the 50S ribosomal subunit. Forms a cluster with proteins L14 and L24e.

Functionally, one of the primary rRNA binding proteins, it binds directly near the 3'-end of the 23S rRNA, where it nucleates assembly of the 50S subunit. The protein is Large ribosomal subunit protein uL3 of Metallosphaera sedula (strain ATCC 51363 / DSM 5348 / JCM 9185 / NBRC 15509 / TH2).